A 352-amino-acid chain; its full sequence is Dead end protein homolog 1 (352 aa).

2 RRM domains span residues 58–136 and 138–218; these read SEVY…RSTE and CELT…WLKP. Position 336 is an omega-N-methylarginine (Arg336).

In terms of assembly, interacts with APOBEC3. In terms of tissue distribution, isoform 1 and isoform 2 are expressed in testis. Isoform 1 is expressed continuously in post natal (PN) testis although levels are low between PN1 to PN6. Isoform 2 is expressed from PN 20 onwards. Isoform 2 is strongly expressed in meiotic and in post-meiotic germ cells of the testis with highest expression at the elongated spermatid stage (at protein level). Expressed in testis and heart. Expressed in germ cells and genital ridges. Not detected in testicular tumors.

Its subcellular location is the nucleus. The protein localises to the cytoplasm. In terms of biological role, RNA-binding factor that positively regulates gene expression by prohibiting miRNA-mediated gene suppression. Relieves miRNA repression in germline cells. Prohibits the function of several miRNAs by blocking the accessibility of target mRNAs. Sequence-specific RNA-binding factor that binds specifically to U-rich regions (URRs) in the 3' untranslated region (3'-UTR) of several mRNAs. Does not bind to miRNAs. Isoform 1 may play a role during primordial germ cell (PGC) survival. However, does not seem to be essential for PGC migration. This Mus musculus (Mouse) protein is Dead end protein homolog 1 (Dnd1).